Reading from the N-terminus, the 1368-residue chain is DNA-directed RNA polymerase subunit beta (1368 aa).

It belongs to the RNA polymerase beta chain family. As to quaternary structure, the RNAP catalytic core consists of 2 alpha, 1 beta, 1 beta' and 1 omega subunit. When a sigma factor is associated with the core the holoenzyme is formed, which can initiate transcription.

The enzyme catalyses RNA(n) + a ribonucleoside 5'-triphosphate = RNA(n+1) + diphosphate. DNA-dependent RNA polymerase catalyzes the transcription of DNA into RNA using the four ribonucleoside triphosphates as substrates. This Cupriavidus pinatubonensis (strain JMP 134 / LMG 1197) (Cupriavidus necator (strain JMP 134)) protein is DNA-directed RNA polymerase subunit beta.